The sequence spans 323 residues: Tumor-associated calcium signal transducer 2 (323 aa).

An N-terminal signal peptide occupies residues 1–26 (MARGPGLAPPPLRLPLLLLVLAAVTG). Over 27 to 274 (HTAAQDNCTC…PPKFSMKRLT (248 aa)) the chain is Extracellular. N-linked (GlcNAc...) asparagine glycosylation is present at asparagine 33. The Thyroglobulin type-1 domain maps to 70-145 (TSKCLLLKAR…TDKGDLSLRC (76 aa)). Cystine bridges form between cysteine 73-cysteine 108, cysteine 119-cysteine 125, and cysteine 127-cysteine 145. An N-linked (GlcNAc...) asparagine glycan is attached at asparagine 120. N-linked (GlcNAc...) asparagine glycans are attached at residues asparagine 168 and asparagine 208. The helical transmembrane segment at 275–297 (AGLIAVIVVVVVALVAGMAVLVI) threads the bilayer. Residues 298–323 (TNRRKSGKYKKVEIKELGELRKEPSL) lie on the Cytoplasmic side of the membrane.

This sequence belongs to the EPCAM family. In terms of processing, the N-terminus is blocked. In terms of tissue distribution, placenta, pancreatic carcinoma cell lines.

The protein localises to the membrane. Its function is as follows. May function as a growth factor receptor. This chain is Tumor-associated calcium signal transducer 2 (TACSTD2), found in Homo sapiens (Human).